Reading from the N-terminus, the 245-residue chain is GTP cyclohydrolase 1 type 2 homolog (245 aa).

Residues His-63, His-64, Asp-100, His-213, and Glu-217 each coordinate a divalent metal cation.

The protein belongs to the GTP cyclohydrolase I type 2/NIF3 family. As to quaternary structure, homohexamer.

The sequence is that of GTP cyclohydrolase 1 type 2 homolog from Archaeoglobus fulgidus (strain ATCC 49558 / DSM 4304 / JCM 9628 / NBRC 100126 / VC-16).